Here is a 165-residue protein sequence, read N- to C-terminus: Pyruvoyl-dependent arginine decarboxylase (165 aa).

Ser53 is subject to Pyruvic acid (Ser).

This sequence belongs to the PdaD family. It depends on pyruvate as a cofactor.

The enzyme catalyses L-arginine + H(+) = agmatine + CO2. This is Pyruvoyl-dependent arginine decarboxylase from Methanococcus aeolicus (strain ATCC BAA-1280 / DSM 17508 / OCM 812 / Nankai-3).